A 350-amino-acid chain; its full sequence is B1 bradykinin receptor (350 aa).

Over 1-41 the chain is Extracellular; it reads MASRAPLELLPLNRSQLSPPNATTCDDAPEAWDLLHRVLPS. N-linked (GlcNAc...) asparagine glycosylation is found at N13 and N21. A helical membrane pass occupies residues 42 to 62; it reads VIIIICVCGLLGNLLVLAVLL. The Cytoplasmic segment spans residues 63-72; sequence RPRRRLNVAE. A helical transmembrane segment spans residues 73 to 93; that stretch reads MYLANLAASDLVFVLGLPFWA. Residues 94–110 lie on the Extracellular side of the membrane; the sequence is ANISNQFRWPFGGLLCR. A glycan (N-linked (GlcNAc...) asparagine) is linked at N95. Residues C109 and C186 are joined by a disulfide bond. A helical transmembrane segment spans residues 111–131; that stretch reads LVNGVIKANLFISIFLVVAIS. The Cytoplasmic portion of the chain corresponds to 132–150; sequence RDRYRALVHPMATRRRRQA. Residues 151 to 171 traverse the membrane as a helical segment; sequence RATCVLIWVAGSLLSVPTFLF. The Extracellular segment spans residues 172–204; the sequence is RSIEAVPELNNDSACVLLHPPGAWHVARMVELN. N182 is a glycosylation site (N-linked (GlcNAc...) asparagine). The helical transmembrane segment at 205 to 225 threads the bilayer; sequence VLGFLLPLAAIVFFNCHILAS. Over 226 to 248 the chain is Cytoplasmic; the sequence is LRGRPEVRGARCGGPPDGRTTAL. The chain crosses the membrane as a helical span at residues 249–269; sequence ILTFVAAFLVCWTPYHFFAFL. At 270–292 the chain is on the extracellular side; the sequence is EFLTQVQVVRGCFWENFKDLGLQ. The helical transmembrane segment at 293–313 threads the bilayer; sequence YASFFAFINSCLNPVIYVFVG. Residues 314–350 are Cytoplasmic-facing; that stretch reads RLFRTRVWDLFKQCAPRRPPAVSWSHRKRVLQLFWQN. C327 carries S-palmitoyl cysteine lipidation.

The protein belongs to the G-protein coupled receptor 1 family. Bradykinin receptor subfamily. BDKRB1 sub-subfamily.

Its subcellular location is the cell membrane. Functionally, this is a receptor for bradykinin. Could be a factor in chronic pain and inflammation. This is B1 bradykinin receptor (BDKRB1) from Canis lupus familiaris (Dog).